The chain runs to 107 residues: U1-lycotoxin-Ls1w (107 aa).

Positions Met-1–Ser-20 are cleaved as a signal peptide. Positions Glu-21–Arg-41 are excised as a propeptide. 4 disulfides stabilise this stretch: Cys-44-Cys-59, Cys-51-Cys-68, Cys-58-Cys-86, and Cys-70-Cys-84.

This sequence belongs to the neurotoxin 19 (CSTX) family. 04 (U1-Lctx) subfamily. In terms of tissue distribution, expressed by the venom gland.

The protein resides in the secreted. In Lycosa singoriensis (Wolf spider), this protein is U1-lycotoxin-Ls1w.